Consider the following 529-residue polypeptide: MGHRHSKSKSSDPPPSSSSSSSGNVVHHVKPAGERRGSSGSGTVGSSGSGTGGSRSTTSTQQNGRILGRPMEEVRRTYEFGRELGRGQFGVTYLVTHKETKQQVACKSIPTRRLVHKDDIEDVRREVQIMHHLSGHRNIVDLKGAYEDRHSVNLIMELCEGGELFDRIISKGLYSERAAADLCRQMVMVVHSCHSMGVMHRDLKPENFLFLSKDENSPLKATDFGLSVFFKPGDKFKDLVGSAYYVAPEVLKRNYGPEADIWSAGVILYILLSGVPPFWGENETGIFDAILQGQLDFSADPWPALSDGAKDLVRKMLKYDPKDRLTAAEVLNHPWIREDGEASDKPLDNAVLSRMKQFRAMNKLKKMALKVIAENLSEEEIIGLKEMFKSLDTDNNGIVTLEELRTGLPKLGSKISEAEIRQLMEAADMDGDGSIDYLEFISATMHMNRIEREDHLYTAFQFFDNDNSGYITMEELELAMKKYNMGDDKSIKEIIAEVDTDRDGKINYEEFVAMMKKGNPELVPNRRRM.

The disordered stretch occupies residues 1 to 73 (MGHRHSKSKS…GRILGRPMEE (73 aa)). Residue Gly-2 is the site of N-myristoyl glycine attachment. A compositionally biased stretch (gly residues) spans 39–53 (SGSGTVGSSGSGTGG). Positions 78–336 (YEFGRELGRG…AAEVLNHPWI (259 aa)) constitute a Protein kinase domain. Residues 84 to 92 (LGRGQFGVT) and Lys-107 each bind ATP. Asp-202 acts as the Proton acceptor in catalysis. At Ser-242 the chain carries Phosphoserine. Residues 342–372 (ASDKPLDNAVLSRMKQFRAMNKLKKMALKVI) form an autoinhibitory domain region. 4 EF-hand domains span residues 379 to 414 (EEII…LGSK), 415 to 450 (ISEA…MNRI), 451 to 485 (ERED…KYNM), and 486 to 521 (GDDK…GNPE). Positions 392, 394, 396, 403, 428, 430, 432, 434, 439, 464, 466, 468, 470, 475, 499, 501, 503, 505, and 510 each coordinate Ca(2+).

It belongs to the protein kinase superfamily. Ser/Thr protein kinase family. CDPK subfamily. As to quaternary structure, interacts with GHR1. As to expression, expressed in both guard cells and mesophyll cells.

The protein localises to the cytoplasm. It localises to the nucleus. The enzyme catalyses L-seryl-[protein] + ATP = O-phospho-L-seryl-[protein] + ADP + H(+). It catalyses the reaction L-threonyl-[protein] + ATP = O-phospho-L-threonyl-[protein] + ADP + H(+). With respect to regulation, activated by calcium. Autophosphorylation may play an important role in the regulation of the kinase activity. Functionally, may play a role in signal transduction pathways that involve calcium as a second messenger. Functions in abscisic acid (ABA) regulation of guard cell S-type anion- and Ca(2+)-permeable channels and stomatal closure. The chain is Calcium-dependent protein kinase 3 from Arabidopsis thaliana (Mouse-ear cress).